We begin with the raw amino-acid sequence, 387 residues long: Alpha-sarcoglycan (387 aa).

Residues 1-23 form the signal peptide; it reads MAAAVTWIPLLAGLLAGLRDTKA. Topologically, residues 24–293 are extracellular; it reads QQTTLHLLVG…RDFLTDALVT (270 aa). N-linked (GlcNAc...) asparagine glycosylation is found at asparagine 174 and asparagine 246. A helical transmembrane segment spans residues 294–314; that stretch reads LLVPLLVALLLTLLLAYIMCF. Over 315–387 the chain is Cytoplasmic; sequence RREGRLKRDM…AQMPLILDQH (73 aa). Serine 377 carries the phosphoserine modification.

Belongs to the sarcoglycan alpha/epsilon family. As to quaternary structure, cross-link to form 2 major subcomplexes: one consisting of SGCB, SGCD and SGCG and the other consisting of SGCB and SGCD. The association between SGCB and SGCG is particularly strong while SGCA is loosely associated with the other sarcoglycans. Interacts with the syntrophin SNTA1. Striated muscle, both skeletal and cardiac.

It localises to the cell membrane. It is found in the sarcolemma. The protein resides in the cytoplasm. Its subcellular location is the cytoskeleton. Component of the sarcoglycan complex, a subcomplex of the dystrophin-glycoprotein complex which forms a link between the F-actin cytoskeleton and the extracellular matrix. The protein is Alpha-sarcoglycan (Sgca) of Mus musculus (Mouse).